The sequence spans 424 residues: Proline--tRNA ligase (424 aa).

The protein belongs to the class-II aminoacyl-tRNA synthetase family. ProS type 2 subfamily. As to quaternary structure, homodimer.

It is found in the cytoplasm. It carries out the reaction tRNA(Pro) + L-proline + ATP = L-prolyl-tRNA(Pro) + AMP + diphosphate. Functionally, catalyzes the attachment of proline to tRNA(Pro) in a two-step reaction: proline is first activated by ATP to form Pro-AMP and then transferred to the acceptor end of tRNA(Pro). In Ehrlichia chaffeensis (strain ATCC CRL-10679 / Arkansas), this protein is Proline--tRNA ligase.